We begin with the raw amino-acid sequence, 152 residues long: 3-hydroxyacyl-[acyl-carrier-protein] dehydratase FabZ (152 aa).

The active site involves histidine 54.

It belongs to the thioester dehydratase family. FabZ subfamily.

The protein localises to the cytoplasm. It catalyses the reaction a (3R)-hydroxyacyl-[ACP] = a (2E)-enoyl-[ACP] + H2O. Functionally, involved in unsaturated fatty acids biosynthesis. Catalyzes the dehydration of short chain beta-hydroxyacyl-ACPs and long chain saturated and unsaturated beta-hydroxyacyl-ACPs. The chain is 3-hydroxyacyl-[acyl-carrier-protein] dehydratase FabZ from Roseobacter denitrificans (strain ATCC 33942 / OCh 114) (Erythrobacter sp. (strain OCh 114)).